Here is a 702-residue protein sequence, read N- to C-terminus: Phosphatase and actin regulator 4 (702 aa).

Disordered stretches follow at residues 1–37 (MEDPFEEADQPTTEPGMVLDSVEAGDTTPPTKRKSKF), 72–194 (RKPR…SSGG), and 222–363 (NLSV…PFPA). The RPEL 1 repeat unit spans residues 63–88 (EVLERKISMRKPREELVKRGVLLEDP). Over residues 72 to 84 (RKPREELVKRGVL) the composition is skewed to basic and acidic residues. Polar residues predominate over residues 106–120 (GHTTPIGNARSSSPV). A phosphoserine mark is found at Ser116, Ser118, Ser131, and Ser147. A compositionally biased stretch (polar residues) spans 147–156 (STGSQPNSEA). Positions 163-173 (VPKPPLLPPKR) are enriched in pro residues. Residues 233–250 (TLPAAPASTNTTATPSLT) are compositionally biased toward low complexity. Ser270 and Ser291 each carry phosphoserine. Polar residues predominate over residues 301–318 (PSTSVPTLESAAAITTKT). Ser342 and Ser344 each carry phosphoserine. Over residues 342–362 (SPSPPLPTHIPPEPPRTPPFP) the composition is skewed to pro residues. The residue at position 358 (Thr358) is a Phosphothreonine. Phosphoserine is present on Ser427. The residue at position 432 (Thr432) is a Phosphothreonine. A phosphoserine mark is found at Ser443, Ser453, and Ser464. The interval 469–536 (IEMLKVPDDE…EEDEDESYQS (68 aa)) is disordered. Polar residues predominate over residues 484-497 (TCPSTFSEEMTPTS). A compositionally biased stretch (acidic residues) spans 508–518 (EEEEKESDSDS). Ser514, Ser516, Ser557, and Ser590 each carry phosphoserine. RPEL repeat units follow at residues 583-608 (NTLIRRLSQRPTPEELEQRNILQPKN) and 621-646 (RRLTRKLSQRPTVAELLARKILRFNE). The interval 592-615 (RPTPEELEQRNILQPKNEADRQAE) is disordered. Phosphoserine is present on Ser628.

Belongs to the phosphatase and actin regulator family. As to quaternary structure, binds PPP1CA and actin.

The protein localises to the cytoplasm. It is found in the cell projection. Its subcellular location is the lamellipodium. Functionally, regulator of protein phosphatase 1 (PP1) required for neural tube and optic fissure closure, and enteric neural crest cell (ENCCs) migration during development. Acts as an activator of PP1 by interacting with PPP1CA and preventing phosphorylation of PPP1CA at 'Thr-320'. During neural tube closure, localizes to the ventral neural tube and activates PP1, leading to down-regulate cell proliferation within cranial neural tissue and the neural retina. Also acts as a regulator of migration of enteric neural crest cells (ENCCs) by activating PP1, leading to dephosphorylation and subsequent activation of cofilin (COF1 or COF2) and repression of the integrin signaling through the RHO/ROCK pathway. The sequence is that of Phosphatase and actin regulator 4 (PHACTR4) from Homo sapiens (Human).